The following is a 417-amino-acid chain: Snake venom metalloproteinase kistomin (417 aa).

A signal peptide spans 1–20 (MIEVLLVTICLAAFPYQGSS). Positions 21 to 189 (IILESGNVND…KKPFRLNLTP (169 aa)) are excised as a propeptide. In terms of domain architecture, Peptidase M12B spans 197–391 (AKVYLVIVAD…RKPECLFKKP (195 aa)). Disulfide bonds link C308–C386, C348–C370, and C350–C353. Position 333 (H333) interacts with Zn(2+). E334 is a catalytic residue. Residues H337 and H343 each coordinate Zn(2+). Positions 392–417 (LRTDTVSTPVSGNEPLEVITMDDFYA) are excised as a propeptide.

It belongs to the venom metalloproteinase (M12B) family. P-I subfamily. Monomer. Zn(2+) serves as cofactor. In terms of tissue distribution, expressed by the venom gland.

Its subcellular location is the secreted. Inhibited by EDTA, and O-phenanthrolene. Snake venom zinc metalloprotease that inhibits platelet aggregation by binding specifically to platelet glycoprotein VI (GP6) and platelet glycoprotein Ib alpha (GP1BA). It inhibits the interaction between collagen and platelet GP6 by cleaving GP6 (at '225-Glu-|-Ala-226' and '238-Val-|-Phe-239' bonds), and inhibits vWF-induced platelet aggregation by cleaving GP1BA and vWF. Cleavage of GP1BA occurs at two distinct sites to generate two soluble fragments. It also cleaves alpha- (FGA) and subsequently the gamma-chain (FGG) of fibrinogen, leaving the beta-chain unaffected. It also inhibits collagen-, convulxin- and ristocetin-induced platelet aggregation. It blocks the adhesion of platelet to immobilized collagen, but only exerts a slight inhibition to fibrinogen. In vivo, it exerts potent antithrombotic effect. The protein is Snake venom metalloproteinase kistomin of Calloselasma rhodostoma (Malayan pit viper).